A 172-amino-acid chain; its full sequence is Small t antigen (172 aa).

Methionine 1 carries the N-acetylmethionine; by host modification. The J domain occupies glutamate 12–glycine 75. Residues cysteine 101–cysteine 114 form a C4-type; atypical zinc finger. An H1C3-type; atypical zinc finger spans residues histidine 120–cysteine 141.

In terms of assembly, interacts with host PPP2R1A; the interaction inhibits PP2A activity.

Its subcellular location is the host cytoplasm. It localises to the host nucleus. Promotes efficient viral genome replication by accelerating both G1 and S phase progression of the cell cycle. Inhibits host PP2A by binding to the A subunit, thereby displacing lower affinity regulatory B subunit. Inactivation of PP2A in turn results in the transactivation of cyclin A and cyclin D1 promoters. Late during the infection cycle, ST may induce dephosphorylation of host MTOR, leading to the inhibition of cap-dependent translation. May establish and maintain high levels of viral genomes during persistent infection in cell culture. The polypeptide is Small t antigen (Simian virus 12 (strain wt100) (SV-12)).